The sequence spans 649 residues: MSGVRAVRISIESACEKQVQEVGLDGTETYLQPLSMSQNLARLAQRIDFSQGSGSEEEEAAGPDGDAPDWGGAGADQDDEEGLVKFQPSLWPWDSVRNNLRSALTEMCVLYDVLSIVRDKKFMTLDPVSQDALPPKQSPQTLQLISKKKSLAGAAQILLKGAERLTKSVAENQENKLQRDFNSELLRLRQHWKLRKVGDKILGDLSYRSAGSLFPHHGTFEVIKNTDIDLDKKIPEDYCPLDVQIPSDLEGSAYIKVSIQKQAPDIGDLGTVNLFKRPLPKSKPGSPHWQTKLEAAQNVLLCKEIFAQLSREAVQIKSQIPHIVVKNQIISQPFPSLQLSISLCHSSDDKKSQKCAAEKPGQEDHLYVLEHNLHLLIREFHKQTLSSIVMPHPASAPFGHKRMRLSGPQAFDKNEINSIQSTEGLLEKIIKQAKHIFLRSRTAATIDSLASRIEDPQIQAHWSNINDVYESSVKVLITSQGYEQICKSIQLQLNIGVEQVRVVHRDGRVIMLSHQEQELQDFLLSQMSQHQVHAVQQLAKVMGWQVLSFSNHVGLGPIESIGNASAITVASPSGDYAISVRNGPESGSKIMVQFPRNQCKDLPKSDVLQDSKWSHLRGPFKEVQWNKMEGRNFVYKMELLMSALSPCLL.

A disordered region spans residues 51–79 (QGSGSEEEEAAGPDGDAPDWGGAGADQDD).

This sequence belongs to the Mediator complex subunit 17 family. Component of the Mediator complex, which is composed of MED1, MED4, MED6, MED7, MED8, MED9, MED10, MED11, MED12, MED13, MED13L, MED14, MED15, MED16, MED17, MED18, MED19, MED20, MED21, MED22, MED23, MED24, MED25, MED26, MED27, MED29, MED30, MED31, CCNC, CDK8 and CDC2L6/CDK11. The MED12, MED13, CCNC and CDK8 subunits form a distinct module termed the CDK8 module. Mediator containing the CDK8 module is less active than Mediator lacking this module in supporting transcriptional activation. Individual preparations of the Mediator complex lacking one or more distinct subunits have been variously termed ARC, CRSP, DRIP, PC2, SMCC and TRAP. Interacts with STAT2. Interacts with GATA1 and PPARG.

The protein resides in the nucleus. In terms of biological role, component of the Mediator complex, a coactivator involved in the regulated transcription of nearly all RNA polymerase II-dependent genes. Mediator functions as a bridge to convey information from gene-specific regulatory proteins to the basal RNA polymerase II transcription machinery. Mediator is recruited to promoters by direct interactions with regulatory proteins and serves as a scaffold for the assembly of a functional preinitiation complex with RNA polymerase II and the general transcription factors. The polypeptide is Mediator of RNA polymerase II transcription subunit 17 (Med17) (Mus musculus (Mouse)).